The chain runs to 434 residues: Zinc finger protein kipf (434 aa).

A ZAD domain is found at 7 to 88 (NVCRTCMDET…EQSYQHFFRV (82 aa)). Zn(2+) contacts are provided by cysteine 9, cysteine 12, cysteine 61, and cysteine 64. A disordered region spans residues 117–173 (QLKSDRQQDTQQMTKTQKPDDDLSQKQTLQAKLQEGNIDGPPESFTLHPRKRTCRTE). Residues 197-219 (YNCPHCSKRFCSQTQLRTHITDL) form a C2H2-type 1; degenerate zinc finger. 3 C2H2-type zinc fingers span residues 221 to 243 (NRCP…LRNH), 249 to 271 (HKCF…LRTH), and 277 to 299 (LSCS…RREH). The segment at 295 to 328 (HRREHKQRPGSSKSESTKDPDSDDSDQAQDLKPK) is disordered. Serine 316 and serine 319 each carry phosphoserine. 3 consecutive C2H2-type zinc fingers follow at residues 348–370 (PICD…MLTH), 377–399 (KKCT…ERGH), and 404–427 (FRCE…KRIH).

In terms of assembly, homodimer; mediated by the ZAD domain. Interacts (via C2H2 type zinc finger 4) with rhi/rhino (via Chromo domain). Dimerization is required for association with DNA and interaction with rhi/rhino. Primarily expressed in ovaries and absent from testes. In ovaries very low levels in germline stem cells and cystoblasts but abundant in developing cysts and polyploid nurse cells.

The protein localises to the nucleus. The protein resides in the chromosome. In terms of biological role, DNA-binding zinc finger protein that recruits chromo domain protein rhino/rhi to specific chromatin regions enriched in H3K9me2/3 histone methylation, mediating piRNA (piwi-interacting RNA) biogenesis. May bind to GC rich DNA sequences including a 5'-GRGGN-3' sequence motif. Nucleates rhi/rhino accumulation and stabilizes its expansion. Involved in piRNA transposon repression, particularly in the female ovary during oogenesis. This chain is Zinc finger protein kipf, found in Drosophila melanogaster (Fruit fly).